Here is a 587-residue protein sequence, read N- to C-terminus: Glutaconyl-CoA decarboxylase subunit alpha (587 aa).

A CoA carboxyltransferase N-terminal domain is found at 31–298; sequence LKKIEEEIHQ…YDPEFFRVDD (268 aa). Residues 31-558 form a carboxyltransferase region; it reads LKKIEEEIHQ…RGYVEAFTEA (528 aa). Residues 295–558 form the CoA carboxyltransferase C-terminal domain; that stretch reads RVDDPKAPAF…RGYVEAFTEA (264 aa).

As to quaternary structure, heterooctamer consisting of two alpha, two beta, two gamma and two delta subunits.

It catalyses the reaction (2E)-glutaconyl-CoA + Na(+)(in) + H(+) = (2E)-butenoyl-CoA + Na(+)(out) + CO2. It participates in amino-acid degradation; L-glutamate degradation via hydroxyglutarate pathway; crotonoyl-CoA from L-glutamate: step 5/5. Its function is as follows. Decarboxylase subunit of the primary sodium pump glutaconyl-CoA decarboxylase (GCD). The chain is Glutaconyl-CoA decarboxylase subunit alpha (gcdA) from Acidaminococcus fermentans (strain ATCC 25085 / DSM 20731 / CCUG 9996 / CIP 106432 / VR4).